A 229-amino-acid chain; its full sequence is Transmembrane emp24 domain-containing protein 5 (229 aa).

A signal peptide spans 1–27; the sequence is MGDKIWLPFPVLLLAALPPVLLPGAAG. Residues 28-196 are Lumenal-facing; that stretch reads FTPSLDSDFT…IQESNFDRVN (169 aa). The GOLD domain maps to 45 to 126; the sequence is KECFYQPMPL…EKVIFFELIL (82 aa). Residues 197-217 traverse the membrane as a helical segment; sequence FWSMVNLVVMVVVSAIQVYML. The Cytoplasmic segment spans residues 218-229; it reads KSLFEDKRKSRT.

The protein belongs to the EMP24/GP25L family. Interacts with TMED9 and TMED10.

Its subcellular location is the endoplasmic reticulum membrane. The protein resides in the golgi apparatus. It localises to the cis-Golgi network membrane. It is found in the endoplasmic reticulum-Golgi intermediate compartment membrane. Potential role in vesicular protein trafficking, mainly in the early secretory pathway. Required for the maintenance of the Golgi apparatus; involved in protein exchange between Golgi stacks during assembly. Probably not required for COPI-vesicle-mediated retrograde transport. The polypeptide is Transmembrane emp24 domain-containing protein 5 (TMED5) (Homo sapiens (Human)).